A 128-amino-acid chain; its full sequence is Translation initiation factor 5A (128 aa).

Residue Lys-35 is modified to Hypusine.

This sequence belongs to the eIF-5A family.

Its subcellular location is the cytoplasm. Functionally, functions by promoting the formation of the first peptide bond. The sequence is that of Translation initiation factor 5A (eif5a) from Methanosarcina mazei (strain ATCC BAA-159 / DSM 3647 / Goe1 / Go1 / JCM 11833 / OCM 88) (Methanosarcina frisia).